A 521-amino-acid polypeptide reads, in one-letter code: Bifunctional purine biosynthesis protein PurH (521 aa).

The region spanning 1 to 147 (MAKITRALIS…KNNADVTVVV (147 aa)) is the MGS-like domain.

It belongs to the PurH family.

It catalyses the reaction (6R)-10-formyltetrahydrofolate + 5-amino-1-(5-phospho-beta-D-ribosyl)imidazole-4-carboxamide = 5-formamido-1-(5-phospho-D-ribosyl)imidazole-4-carboxamide + (6S)-5,6,7,8-tetrahydrofolate. The enzyme catalyses IMP + H2O = 5-formamido-1-(5-phospho-D-ribosyl)imidazole-4-carboxamide. The protein operates within purine metabolism; IMP biosynthesis via de novo pathway; 5-formamido-1-(5-phospho-D-ribosyl)imidazole-4-carboxamide from 5-amino-1-(5-phospho-D-ribosyl)imidazole-4-carboxamide (10-formyl THF route): step 1/1. It functions in the pathway purine metabolism; IMP biosynthesis via de novo pathway; IMP from 5-formamido-1-(5-phospho-D-ribosyl)imidazole-4-carboxamide: step 1/1. This is Bifunctional purine biosynthesis protein PurH from Geobacter metallireducens (strain ATCC 53774 / DSM 7210 / GS-15).